A 134-amino-acid chain; its full sequence is Small ribosomal subunit protein uS8c (134 aa).

The protein belongs to the universal ribosomal protein uS8 family. Part of the 30S ribosomal subunit.

It is found in the plastid. The protein localises to the chloroplast. One of the primary rRNA binding proteins, it binds directly to 16S rRNA central domain where it helps coordinate assembly of the platform of the 30S subunit. This Arabis hirsuta (Hairy rock-cress) protein is Small ribosomal subunit protein uS8c (rps8).